The chain runs to 524 residues: MSRDSLFVAGFVDISTCPKEDPSLNLDAQTWSRYLPLSTSIPLTVEHFSEAQVGWVTGLFSVAQGLFCTAVITAGEFLELLDSLYLECTVAQHSPKADLPRNPRAEVLHSWLPELSLSSVHPDLLGTKDEPGQVFHHISLCALGRRRGTVAVYGDSLAWVLSRFQSLSRDDVAMIATNALTPPSQAPEFTVKLGLLFAKAIDAGFISNRISTLKLDRQAAGISPATYLKASAVPQKLETAAPLNQPEGADTLIDSTMSGPGAPPAPQDDLIPVPRSAFLNMLESTVSRTHPANGDAPALLPFGRYNMVQVPKGLTPYVRPVGFIEPSDQDDYRYPSYTGPRPYDYFAPRQLCRNCCTSRPRKRAREDPEDEVSFPGEESTVFRKDLTDLSKSLAELQSEIRELKQMQNTPRPYPRPEHHYPAFDPLMYGLRPLPNPDKFPKEFICSDYFTKDESASKKPEVVHIPNPEQHVPACAAQPEVKLVEEKDVAPKQPRVVNASFQPKAETSKAATLQKLFCDEMLSKQ.

Catalysis depends on charge relay system residues His47, Ser116, and His137. The interval 268–287 (DDLIPVPRSAFLNMLESTVS) is interaction with pAP. The Nuclear localization signal motif lies at 359–365 (RPRKRAR). Residues 359 to 378 (RPRKRAREDPEDEVSFPGEE) are disordered. Residues 504 to 524 (AETSKAATLQKLFCDEMLSKQ) are interaction with major capsid protein.

Belongs to the herpesviridae capsid scaffolding protein family. As to quaternary structure, homomultimer. Interacts with major capsid protein. Exists in a monomer-dimer equilibrium with the dimer being the active species. In terms of processing, capsid scaffolding protein is cleaved by assemblin after formation of the spherical procapsid. As a result, the capsid obtains its mature, icosahedral shape. Cleavages occur at two or more sites: release (R-site) and maturation (M-site).

It localises to the host cytoplasm. It is found in the host nucleus. The enzyme catalyses Cleaves -Ala-|-Ser- and -Ala-|-Ala- bonds in the scaffold protein.. Functionally, acts as a scaffold protein by binding major capsid protein in the cytoplasm, inducing the nuclear localization of both proteins. Multimerizes in the nucleus such as major capsid protein forms the icosahedral T=16 capsid. Autocatalytic cleavage releases the assembly protein, and subsequently abolishes interaction with major capsid protein. Cleavages products are evicted from the capsid before or during DNA packaging. Its function is as follows. Protease that plays an essential role in virion assembly within the nucleus. Catalyzes the cleavage of the assembly protein after formation of the spherical procapsid. By that cleavage, the capsid matures and gains its icosahedral shape. The cleavage sites seem to include -Ala-Ser-, -Ala-Ala-, as well as Ala-Thr bonds. Assemblin and cleavages products are evicted from the capsid before or during DNA packaging. In terms of biological role, plays a major role in capsid assembly. Acts as a scaffold protein by binding major capsid protein. Multimerizes in the nucleus such as major capsid protein forms the icosahedral T=16 capsid. Cleaved by assemblin after capsid completion. The cleavages products are evicted from the capsid before or during DNA packaging. This Connochaetes taurinus (Blue wildebeest) protein is Capsid scaffolding protein (17).